The sequence spans 228 residues: Expansin-B13 (228 aa).

The first 22 residues, 1–22 (MASSSLLLASVVVAAMVSAVSC), serve as a signal peptide directing secretion. An N-linked (GlcNAc...) asparagine glycan is attached at Asn-32. Residues 61 to 172 (SGACGYKDVD…KEKGSEEWKA (112 aa)) form the Expansin-like EG45 domain. 2 disulfides stabilise this stretch: Cys-64/Cys-92 and Cys-100/Cys-106. Residues 142–223 (GKDEELLKYV…GWKADSVYKS (82 aa)) form the Expansin-like CBD domain.

This sequence belongs to the expansin family. Expansin B subfamily.

Its subcellular location is the secreted. It localises to the cell wall. The protein resides in the membrane. May cause loosening and extension of plant cell walls by disrupting non-covalent bonding between cellulose microfibrils and matrix glucans. No enzymatic activity has been found. May be required for rapid internodal elongation in deepwater rice during submergence. The sequence is that of Expansin-B13 (EXPB13) from Oryza sativa subsp. japonica (Rice).